The sequence spans 304 residues: MERLQISLPGLEMKNPVMPASGCFGFGKEYGQFFDLNQLGAIAIKATTKEARFGNETPRVAETKAGMLNAIGLQNPGLQGVIEQELPRFDDYDVPILANIAGSTMDDYIEVAAELSQQRNVSAIELNISCPNVKQGGIAFGTVPEIAAELTKEVKAVSAVPVYVKLSPNVADIVAIAKAIEKAGADGLAMINTLLGMRIDAKTRRPVLANQYGGLSGAAIKPVALRMIHQVSQQVDIPIIGMGGIQTAEDVIEFLLAGASCIAVGTANFTDPYTCPNIIRDLPHWLDRLEVQSITDLIGGSWNE.

FMN-binding positions include Ser-21 and 45 to 46 (KA). Residues Lys-45 and 69–73 (NAIGL) each bind substrate. Residues Asn-99 and Asn-127 each coordinate FMN. Position 127 (Asn-127) interacts with substrate. Cys-130 functions as the Nucleophile in the catalytic mechanism. Residues Lys-165 and Ile-191 each contribute to the FMN site. 192–193 (NT) contacts substrate. Residues Gly-217, 243 to 244 (GG), and 265 to 266 (GT) each bind FMN.

It belongs to the dihydroorotate dehydrogenase family. Type 1 subfamily. In terms of assembly, heterotetramer of 2 PyrK and 2 PyrD type B subunits. Requires FMN as cofactor.

The protein localises to the cytoplasm. It catalyses the reaction (S)-dihydroorotate + NAD(+) = orotate + NADH + H(+). It participates in pyrimidine metabolism; UMP biosynthesis via de novo pathway; orotate from (S)-dihydroorotate (NAD(+) route): step 1/1. In terms of biological role, catalyzes the conversion of dihydroorotate to orotate with NAD(+) as electron acceptor. The polypeptide is Dihydroorotate dehydrogenase B (NAD(+)), catalytic subunit (pyrD) (Shouchella clausii (strain KSM-K16) (Alkalihalobacillus clausii)).